The chain runs to 265 residues: Capsule polysaccharide export inner-membrane protein CtrC (265 aa).

6 consecutive transmembrane segments (helical) span residues 37 to 57 (IGFL…VLMW), 67 to 84 (TLNI…LMMW), 121 to 141 (IAGA…IGWI), 148 to 168 (FYML…GLVI), 178 to 198 (FGKI…AFFF), and 238 to 258 (WYIV…VSKF). The ABC transmembrane type-2 domain maps to 37-258 (IGFLWLFVEP…LFGLAMVSKF (222 aa)).

The protein belongs to the ABC-2 integral membrane protein family.

Its subcellular location is the cell inner membrane. May form an ATP-driven capsule polysaccharide export apparatus, in association with the CtrB and CtrD proteins. In Neisseria meningitidis serogroup B (strain ATCC BAA-335 / MC58), this protein is Capsule polysaccharide export inner-membrane protein CtrC (ctrC).